The following is a 101-amino-acid chain: Signal recognition particle 19 kDa protein (101 aa).

Belongs to the SRP19 family. As to quaternary structure, part of the signal recognition particle protein translocation system, which is composed of SRP and FtsY. Archaeal SRP consists of a 7S RNA molecule of 300 nucleotides and two protein subunits: SRP54 and SRP19.

It is found in the cytoplasm. In terms of biological role, involved in targeting and insertion of nascent membrane proteins into the cytoplasmic membrane. Binds directly to 7S RNA and mediates binding of the 54 kDa subunit of the SRP. The chain is Signal recognition particle 19 kDa protein from Methanosarcina barkeri (strain Fusaro / DSM 804).